A 237-amino-acid chain; its full sequence is Putative glutathione-dependent formaldehyde-activating enzyme (237 aa).

The CENP-V/GFA domain maps to 38 to 152 (ITLICHCPPS…LGQSGGSEGE (115 aa)). Zn(2+) contacts are provided by Cys42, Cys44, Cys67, Cys69, Cys72, Cys114, and Cys117.

Belongs to the Gfa family. Zn(2+) serves as cofactor.

It catalyses the reaction S-(hydroxymethyl)glutathione = glutathione + formaldehyde. It functions in the pathway one-carbon metabolism; formaldehyde degradation; formate from formaldehyde (glutathione route): step 1/3. In terms of biological role, catalyzes the condensation of formaldehyde and glutathione to S-hydroxymethylglutathione. The sequence is that of Putative glutathione-dependent formaldehyde-activating enzyme from Sordaria macrospora (strain ATCC MYA-333 / DSM 997 / K(L3346) / K-hell).